A 218-amino-acid polypeptide reads, in one-letter code: Ribose-5-phosphate isomerase A (218 aa).

Substrate-binding positions include 28 to 31, 81 to 84, and 94 to 97; these read TGST, DGAD, and KGGG. Glu-103 acts as the Proton acceptor in catalysis. Lys-121 serves as a coordination point for substrate.

This sequence belongs to the ribose 5-phosphate isomerase family. Homodimer.

The enzyme catalyses aldehydo-D-ribose 5-phosphate = D-ribulose 5-phosphate. It functions in the pathway carbohydrate degradation; pentose phosphate pathway; D-ribose 5-phosphate from D-ribulose 5-phosphate (non-oxidative stage): step 1/1. Functionally, catalyzes the reversible conversion of ribose-5-phosphate to ribulose 5-phosphate. In Shewanella piezotolerans (strain WP3 / JCM 13877), this protein is Ribose-5-phosphate isomerase A.